A 97-amino-acid polypeptide reads, in one-letter code: Large ribosomal subunit protein bL31B (97 aa).

It belongs to the bacterial ribosomal protein bL31 family. Type B subfamily. As to quaternary structure, part of the 50S ribosomal subunit.

This Mycolicibacterium paratuberculosis (strain ATCC BAA-968 / K-10) (Mycobacterium paratuberculosis) protein is Large ribosomal subunit protein bL31B (rpmE2).